A 430-amino-acid chain; its full sequence is MTTLTLNTSLLSSRRILAAFSGGLDSTVLLHQLVLWRERHPDVTLRAIHIHHGLSPHADSWVRHCETVCERWQVPLVVERVTLADNGLGIEAHAREARYRAFAQTLLPGEVLATAQHLDDQCETFLLALKRGSGPAGLSAMGERSPFAGTLLLRPLLRETRKTLEQWAVRHGLCWIEDESNQDDAYDRNFLRLRALPLLQQRWPHFPAAVARSATLCAEQERLLDELLASDLTDCITTEGTLRLSPLMSMSDVRRAAILRRWLAMRNAPMPSRDALERIWQEVALARDDASPCLRFGDHEIRRYQSQLWWIKTVAGQHETTVAWPVWQTPLALPAGLGTVQLVPGGELRRPREEESVSIRFKAPGLLHIVGRHGGRKLKKIWQEQGIPPWRRDTTPLLFYGETLIAAAGVFVTREGAAEDKEGVSLVWHA.

Residue 21 to 26 (SGGLDS) coordinates ATP.

It belongs to the tRNA(Ile)-lysidine synthase family.

It localises to the cytoplasm. It catalyses the reaction cytidine(34) in tRNA(Ile2) + L-lysine + ATP = lysidine(34) in tRNA(Ile2) + AMP + diphosphate + H(+). Ligates lysine onto the cytidine present at position 34 of the AUA codon-specific tRNA(Ile) that contains the anticodon CAU, in an ATP-dependent manner. Cytidine is converted to lysidine, thus changing the amino acid specificity of the tRNA from methionine to isoleucine. The chain is tRNA(Ile)-lysidine synthase from Salmonella typhi.